Consider the following 138-residue polypeptide: Microneme antigen L2 (138 aa).

PAN domains are found at residues 9–78 (CFAH…PRSC) and 82–138 (CSDA…SKRA). 6 cysteine pairs are disulfide-bonded: Cys9–Cys78, Cys34–Cys56, Cys38–Cys44, Cys82–Cys86, Cys107–Cys127, and Cys111–Cys117. Position 18 (Ser18) interacts with a carbohydrate. Lys59, Tyr66, and Asp71 together coordinate a carbohydrate.

In terms of assembly, homodimer or heterodimer. Contains six disulfide bonds.

It localises to the cytoplasmic vesicle. The protein localises to the secretory vesicle. Its subcellular location is the microneme. In terms of biological role, galactose-binding lectin. Plays a role in adhesion to the host cell. Has a potential role in invasion of host cells. This chain is Microneme antigen L2, found in Sarcocystis muris.